The primary structure comprises 136 residues: Protein PsiE (136 aa).

4 helical membrane-spanning segments follow: residues 15–35, 55–75, 82–102, and 108–128; these read ILQN…VLFL, YELV…ALIV, FHFP…RLII, and PMDV…LWLC.

It belongs to the PsiE family.

It localises to the cell inner membrane. The chain is Protein PsiE from Salmonella arizonae (strain ATCC BAA-731 / CDC346-86 / RSK2980).